The following is a 141-amino-acid chain: Hemoglobin subunit alpha-3 (141 aa).

Residues 1–141 form the Globin domain; sequence VLSPADKTNV…VSTVLTSKYR (141 aa). Position 58 (His-58) interacts with O2. A heme b-binding site is contributed by His-87.

The protein belongs to the globin family. Heterotetramer of two alpha chains and two beta chains. Red blood cells.

In terms of biological role, involved in oxygen transport from the lung to the various peripheral tissues. The polypeptide is Hemoglobin subunit alpha-3 (Gorilla gorilla gorilla (Western lowland gorilla)).